The chain runs to 170 residues: Ubiquitin-conjugating enzyme E2 G1 (170 aa).

At M1 the chain carries N-acetylmethionine. T2 carries the N-acetylthreonine; in Ubiquitin-conjugating enzyme E2 G1, N-terminally processed modification. The UBC core domain maps to 5 to 166 (QSALLLRRQL…VARCVRKSQE (162 aa)). The Glycyl thioester intermediate role is filled by C90.

The protein belongs to the ubiquitin-conjugating enzyme family. Post-translationally, autoubiquitinated in vitro. As to expression, widely expressed, mainly in skeletal muscle.

It carries out the reaction S-ubiquitinyl-[E1 ubiquitin-activating enzyme]-L-cysteine + [E2 ubiquitin-conjugating enzyme]-L-cysteine = [E1 ubiquitin-activating enzyme]-L-cysteine + S-ubiquitinyl-[E2 ubiquitin-conjugating enzyme]-L-cysteine.. The protein operates within protein modification; protein ubiquitination. Functionally, accepts ubiquitin from the E1 complex and catalyzes its covalent attachment to other proteins. In vitro catalyzes 'Lys-48'-, as well as 'Lys-63'-linked polyubiquitination. May be involved in degradation of muscle-specific proteins. Mediates polyubiquitination of CYP3A4. This Homo sapiens (Human) protein is Ubiquitin-conjugating enzyme E2 G1 (UBE2G1).